Here is a 259-residue protein sequence, read N- to C-terminus: Imidazole glycerol phosphate synthase subunit HisF (259 aa).

Residues Asp-11 and Asp-130 contribute to the active site.

It belongs to the HisA/HisF family. Heterodimer of HisH and HisF.

It localises to the cytoplasm. It carries out the reaction 5-[(5-phospho-1-deoxy-D-ribulos-1-ylimino)methylamino]-1-(5-phospho-beta-D-ribosyl)imidazole-4-carboxamide + L-glutamine = D-erythro-1-(imidazol-4-yl)glycerol 3-phosphate + 5-amino-1-(5-phospho-beta-D-ribosyl)imidazole-4-carboxamide + L-glutamate + H(+). The protein operates within amino-acid biosynthesis; L-histidine biosynthesis; L-histidine from 5-phospho-alpha-D-ribose 1-diphosphate: step 5/9. In terms of biological role, IGPS catalyzes the conversion of PRFAR and glutamine to IGP, AICAR and glutamate. The HisF subunit catalyzes the cyclization activity that produces IGP and AICAR from PRFAR using the ammonia provided by the HisH subunit. The chain is Imidazole glycerol phosphate synthase subunit HisF from Acidovorax ebreus (strain TPSY) (Diaphorobacter sp. (strain TPSY)).